A 139-amino-acid chain; its full sequence is Small ribosomal subunit protein uS11 (139 aa).

Belongs to the universal ribosomal protein uS11 family. In terms of assembly, part of the 30S ribosomal subunit.

Functionally, located on the platform of the 30S subunit. In Pyrobaculum islandicum (strain DSM 4184 / JCM 9189 / GEO3), this protein is Small ribosomal subunit protein uS11.